The chain runs to 90 residues: Molybdopterin synthase sulfur carrier subunit (90 aa).

Gly-90 bears the 1-thioglycine; alternate mark. At Gly-90 the chain carries Glycyl adenylate; alternate.

Belongs to the MoaD family. MOCS2A subfamily. As to quaternary structure, heterotetramer; composed of 2 small (Mocs2A) and 2 large (Mocs2B) subunits. In terms of processing, C-terminal thiocarboxylation occurs in 2 steps, it is first acyl-adenylated (-COAMP) via the hesA/moeB/thiF part of MOCS3, then thiocarboxylated (-COSH) via the rhodanese domain of MOCS3.

It localises to the cytoplasm. Its pathway is cofactor biosynthesis; molybdopterin biosynthesis. Functionally, acts as a sulfur carrier required for molybdopterin biosynthesis. Component of the molybdopterin synthase complex that catalyzes the conversion of precursor Z into molybdopterin by mediating the incorporation of 2 sulfur atoms into precursor Z to generate a dithiolene group. In the complex, serves as sulfur donor by being thiocarboxylated (-COSH) at its C-terminus by MOCS3. After interaction with Mocs2B, the sulfur is then transferred to precursor Z to form molybdopterin. This chain is Molybdopterin synthase sulfur carrier subunit, found in Drosophila ananassae (Fruit fly).